The primary structure comprises 262 residues: Ribosomal RNA small subunit methyltransferase A (262 aa).

S-adenosyl-L-methionine is bound by residues Ile-18, Gly-43, Glu-65, Asp-91, and Asn-110.

It belongs to the class I-like SAM-binding methyltransferase superfamily. rRNA adenine N(6)-methyltransferase family. RsmA subfamily.

The protein resides in the cytoplasm. The enzyme catalyses adenosine(1518)/adenosine(1519) in 16S rRNA + 4 S-adenosyl-L-methionine = N(6)-dimethyladenosine(1518)/N(6)-dimethyladenosine(1519) in 16S rRNA + 4 S-adenosyl-L-homocysteine + 4 H(+). In terms of biological role, specifically dimethylates two adjacent adenosines (A1518 and A1519) in the loop of a conserved hairpin near the 3'-end of 16S rRNA in the 30S particle. May play a critical role in biogenesis of 30S subunits. The chain is Ribosomal RNA small subunit methyltransferase A from Ehrlichia ruminantium (strain Gardel).